Reading from the N-terminus, the 364-residue chain is Probable protein disulfide-isomerase A6 (364 aa).

Positions 1-28 (MKMEMHQIWSRIALASFAFAILFVSVSA) are cleaved as a signal peptide. Thioredoxin domains follow at residues 29 to 137 (DDVV…TEGG) and 139 to 256 (NVKI…EKSG). Active-site nucleophile residues include Cys58, Cys61, Cys177, and Cys180. Disulfide bonds link Cys58-Cys61 and Cys177-Cys180.

Belongs to the protein disulfide isomerase family.

It localises to the endoplasmic reticulum lumen. It catalyses the reaction Catalyzes the rearrangement of -S-S- bonds in proteins.. In Medicago sativa (Alfalfa), this protein is Probable protein disulfide-isomerase A6.